A 266-amino-acid polypeptide reads, in one-letter code: 3-methyl-2-oxobutanoate hydroxymethyltransferase (266 aa).

Residues Asp45 and Asp84 each coordinate Mg(2+). Residues Asp45–Ser46, Asp84, and Lys113 contribute to the 3-methyl-2-oxobutanoate site. Residue Glu115 participates in Mg(2+) binding. Glu183 acts as the Proton acceptor in catalysis.

This sequence belongs to the PanB family. As to quaternary structure, homodecamer; pentamer of dimers. It depends on Mg(2+) as a cofactor.

It localises to the cytoplasm. It carries out the reaction 3-methyl-2-oxobutanoate + (6R)-5,10-methylene-5,6,7,8-tetrahydrofolate + H2O = 2-dehydropantoate + (6S)-5,6,7,8-tetrahydrofolate. Its pathway is cofactor biosynthesis; (R)-pantothenate biosynthesis; (R)-pantoate from 3-methyl-2-oxobutanoate: step 1/2. In terms of biological role, catalyzes the reversible reaction in which hydroxymethyl group from 5,10-methylenetetrahydrofolate is transferred onto alpha-ketoisovalerate to form ketopantoate. The protein is 3-methyl-2-oxobutanoate hydroxymethyltransferase of Coxiella burnetii (strain CbuG_Q212) (Coxiella burnetii (strain Q212)).